We begin with the raw amino-acid sequence, 747 residues long: Ion-translocating oxidoreductase complex subunit C (747 aa).

4Fe-4S ferredoxin-type domains lie at 368-397 and 407-436; these read MEPV…QQLY and KARN…VQYY. [4Fe-4S] cluster is bound by residues cysteine 377, cysteine 380, cysteine 383, cysteine 387, cysteine 416, cysteine 419, cysteine 422, and cysteine 426. Residues 538 to 564 are disordered; that stretch reads VREERARENQTQQETPTVDVPSTELDD.

It belongs to the 4Fe4S bacterial-type ferredoxin family. RnfC subfamily. In terms of assembly, the complex is composed of six subunits: RnfA, RnfB, RnfC, RnfD, RnfE and RnfG. It depends on [4Fe-4S] cluster as a cofactor.

Its subcellular location is the cell inner membrane. Part of a membrane-bound complex that couples electron transfer with translocation of ions across the membrane. The protein is Ion-translocating oxidoreductase complex subunit C of Pectobacterium carotovorum subsp. carotovorum (strain PC1).